Here is a 439-residue protein sequence, read N- to C-terminus: MNISVSMNKFDSKIKFVQLVFVDINGMPKGMEIPASRLEEAVTDGISFDGSSVPGFQGIEDSDLVFKADPDTYVEVPWDNVARVYGFIYKDNKPYGADPRGILKRALEELEKEGYKAYIGPEPEFYLFKKNGTWELEIPDVGGYFDILTLDKARDIRREIAEYMPSFGLIPEVLHHEVGKAQHEIDFRYDEALKTADNIVSFKYITKAVAEMHGLYATFMPKPLFGFPGNGMHLHISLSKDGENVFMGEEGLSEIALHFIGGILKHAKALIAVTNPTVNSYKRLVPGYEAPVYISWGYRNRSALIRVPAFWGKGARIEYRCPDPSANPYFAFAAVLKAGLDGIKHKIDPFAYVEENVYEMSEEKRKELGIETLPGSLGEALEELEKDKVVKEALGDAYKNFINYKWKEWESYLEYLEEKHMPKDTKKVTEWELERYFFL.

The region spanning 12-93 (SKIKFVQLVF…VYGFIYKDNK (82 aa)) is the GS beta-grasp domain. Positions 99–439 (PRGILKRALE…EWELERYFFL (341 aa)) constitute a GS catalytic domain. 2 residues coordinate Mg(2+): E122 and E124. E172 serves as a coordination point for ATP. Positions 177 and 184 each coordinate Mg(2+). G229 is an L-glutamate binding site. Mg(2+) is bound at residue H233. ATP contacts are provided by residues 235–237 (HIS) and S237. Residues R283, E289, and R301 each coordinate L-glutamate. ATP is bound by residues R301, R306, and K313. Position 318 (E318) interacts with Mg(2+). R320 lines the L-glutamate pocket.

The protein belongs to the glutamine synthetase family. Oligomer of 12 subunits arranged in the form of two hexagons. Mg(2+) is required as a cofactor.

Its subcellular location is the cytoplasm. It carries out the reaction L-glutamate + NH4(+) + ATP = L-glutamine + ADP + phosphate + H(+). In terms of biological role, probably involved in nitrogen metabolism via ammonium assimilation. Catalyzes the ATP-dependent biosynthesis of glutamine from glutamate and ammonia. The chain is Glutamine synthetase from Pyrococcus woesei.